The primary structure comprises 412 residues: Putative competence-damage inducible protein (412 aa).

The protein belongs to the CinA family.

This chain is Putative competence-damage inducible protein, found in Bacillus cytotoxicus (strain DSM 22905 / CIP 110041 / 391-98 / NVH 391-98).